A 207-amino-acid polypeptide reads, in one-letter code: Early nodulin-like protein 11 (207 aa).

The first 24 residues, 1-24 (MVSLISIVSVVFLLFTTFYHFGEA), serve as a signal peptide directing secretion. One can recognise a Phytocyanin domain in the interval 25-130 (RIINVGGSLD…GEKVTVVVQS (106 aa)). Residue Asn43 is glycosylated (N-linked (GlcNAc...) asparagine). A disulfide bridge connects residues Cys83 and Cys118. The segment at 129–179 (QSPNHPKPGPAAVTPTLPPKPSTTPAAPAPAPPTPSPKSSTSTMAPAPAPA) is disordered. Over residues 144-164 (TLPPKPSTTPAAPAPAPPTPS) the composition is skewed to pro residues. Residues 165–179 (PKSSTSTMAPAPAPA) show a composition bias toward low complexity. The GPI-anchor amidated serine moiety is linked to residue Ser181. Residues 182 to 207 (SAVGLVAGNGIFWASTLVAVIGLAFA) constitute a propeptide, removed in mature form.

It belongs to the early nodulin-like (ENODL) family. Confined to flowers and siliques.

Its subcellular location is the cell membrane. Its function is as follows. May act as a carbohydrate transporter. Required, together with ENODL11, ENODL12, ENODL13, ENODL14 and ENODL15, for male-female communication and pollen tube reception and burst at the synergid cell surface of the female gametophyte. This Arabidopsis thaliana (Mouse-ear cress) protein is Early nodulin-like protein 11.